The primary structure comprises 339 residues: Ketol-acid reductoisomerase (NADP(+)) (339 aa).

Positions 1–182 constitute a KARI N-terminal Rossmann domain; sequence MKVYYDSDAD…GGGRSGVIET (182 aa). NADP(+) contacts are provided by residues 24-27, arginine 48, serine 51, serine 53, and 83-86; these read YGSQ and DEHQ. Residue histidine 108 is part of the active site. Glycine 134 provides a ligand contact to NADP(+). One can recognise a KARI C-terminal knotted domain in the interval 183 to 328; that stretch reads TFREEVETDL…ARLRKMMPWI (146 aa). Residues aspartate 191, glutamate 195, glutamate 227, and glutamate 231 each contribute to the Mg(2+) site. Serine 252 provides a ligand contact to substrate.

It belongs to the ketol-acid reductoisomerase family. The cofactor is Mg(2+).

It catalyses the reaction (2R)-2,3-dihydroxy-3-methylbutanoate + NADP(+) = (2S)-2-acetolactate + NADPH + H(+). The catalysed reaction is (2R,3R)-2,3-dihydroxy-3-methylpentanoate + NADP(+) = (S)-2-ethyl-2-hydroxy-3-oxobutanoate + NADPH + H(+). The protein operates within amino-acid biosynthesis; L-isoleucine biosynthesis; L-isoleucine from 2-oxobutanoate: step 2/4. It functions in the pathway amino-acid biosynthesis; L-valine biosynthesis; L-valine from pyruvate: step 2/4. Functionally, involved in the biosynthesis of branched-chain amino acids (BCAA). Catalyzes an alkyl-migration followed by a ketol-acid reduction of (S)-2-acetolactate (S2AL) to yield (R)-2,3-dihydroxy-isovalerate. In the isomerase reaction, S2AL is rearranged via a Mg-dependent methyl migration to produce 3-hydroxy-3-methyl-2-ketobutyrate (HMKB). In the reductase reaction, this 2-ketoacid undergoes a metal-dependent reduction by NADPH to yield (R)-2,3-dihydroxy-isovalerate. This chain is Ketol-acid reductoisomerase (NADP(+)), found in Zymomonas mobilis subsp. mobilis (strain ATCC 31821 / ZM4 / CP4).